The primary structure comprises 453 residues: Transcription factor bHLH110 (453 aa).

Disordered regions lie at residues 1–37 (MDSA…YGAS) and 177–197 (SSLP…RGNF). Low complexity-rich tracts occupy residues 8 to 32 (QLQD…SDPS) and 177 to 192 (SSLP…SSQS). The region spanning 322–371 (VESRSSCPPFKVRKEKLGDRIAALQQLVSPFGKTDTASVLMEAIGYIKFL) is the bHLH domain. The segment at 386 to 411 (SRNRPGKASQLVSQSQEGDEEETRDL) is disordered.

As to quaternary structure, homodimer.

It localises to the nucleus. This Arabidopsis thaliana (Mouse-ear cress) protein is Transcription factor bHLH110 (BHLH110).